The chain runs to 1493 residues: Protein RNA-directed DNA methylation 3 (1493 aa).

2 disordered regions span residues M1–R34 and G54–V96. A Nuclear localization signal motif is present at residues K21 to F28. Residues N24–R34 are compositionally biased toward basic and acidic residues. Acidic residues predominate over residues S60–E80. A compositionally biased stretch (basic and acidic residues) spans E81–K92. One can recognise a KOW 1 domain in the interval K239–T266. The interval P393–K432 is disordered. Over residues G401 to G417 the composition is skewed to gly residues. Basic and acidic residues predominate over residues E418–K432. Residues Q501–G528 enclose the KOW 2 domain. Positions S578–G602 are disordered. The span at P586–Y596 shows a compositional bias: basic and acidic residues. The KOW 3 domain occupies T607–S634. 3 disordered regions span residues I692–D711, E728–D747, and A757–W1493. Repeat unit 1 spans residues W732–V741. A 42 X 9 AA approximate WG/GW-rich tandem repeats region spans residues W732 to W1493. The span at A757–D767 shows a compositional bias: low complexity. Repeat copies occupy residues W775–G784, W789–V797, W818–G827, W836–S845, W854–E863, W866–A875, W883–E892, G917–N926, W935–S943, W944–S953, W954–S962, W963–D972, W978–D987, W1003–S1012, W1013–L1022, W1023–S1032, W1033–L1042, W1043–S1052, W1053–S1062, W1063–S1072, W1073–S1082, W1132–G1141, W1144–G1153, W1156–S1165, W1167–G1176, W1180–G1189, W1192–G1201, W1204–S1213, W1217–G1226, W1229–G1238, W1241–G1250, W1253–S1262, W1266–G1275, W1278–G1287, W1290–G1299, W1302–G1311, and W1314–K1323. Over residues G790–V812 the composition is skewed to polar residues. A compositionally biased stretch (basic and acidic residues) spans S846–S860. A compositionally biased stretch (polar residues) spans W866–A875. The segment covering G955–G1090 has biased composition (basic and acidic residues). Residues P1122–K1134 are compositionally biased toward low complexity. The segment covering W1156–D1172 has biased composition (polar residues). Residues A1186 to S1213 are compositionally biased toward gly residues. Over residues G1218–K1231 the composition is skewed to polar residues. Over residues A1235–S1264 the composition is skewed to gly residues. Residues N1270–D1283 are compositionally biased toward polar residues. Over residues S1284–G1321 the composition is skewed to gly residues. 2 stretches are compositionally biased toward polar residues: residues W1366–G1382 and D1392–S1401. Copy 39 of the repeat occupies W1389–P1398. Residues N1416–K1430 are compositionally biased toward basic and acidic residues. Residues A1432 to T1442 show a composition bias toward polar residues. 3 repeat units span residues W1433–T1442, W1467–A1475, and W1484–W1493.

As to quaternary structure, interacts with AGO4 via its C-terminal region and with RNA transcripts. Binds chromatin at loci subject to transcriptional silencing downstream of RNA Polymerase V, but independently from the presence of 24-nt siRNA.

The protein resides in the nucleus. Its subcellular location is the nucleoplasm. Functionally, effector of RNA-directed DNA methylation (RdDM) triggered by small interfering RNAs (siRNAs, 24-nt RNAs). Functions as an adapter protein that binds scaffold transcripts generated by polymerase V and recruits AGO4 and AGO4-bound siRNAs to form an RdDM effector complex. Promotes the expression of 24-nt RNAs. Required for the initial establishment of DNA methylation. Together with AGO4, required for transcriptional gene silencing (TGS) by DNA methylation and repressive histone modifications (H3K9me2) of several chromatin loci. In Arabidopsis thaliana (Mouse-ear cress), this protein is Protein RNA-directed DNA methylation 3.